A 133-amino-acid chain; its full sequence is Small ribosomal subunit protein uS11 (133 aa).

The interval 1 to 22 (MPPKTRGAVRKPRKKDKKNIAL) is disordered. Residues 7–17 (GAVRKPRKKDK) are compositionally biased toward basic residues.

The protein belongs to the universal ribosomal protein uS11 family. As to quaternary structure, part of the 30S ribosomal subunit. Interacts with proteins S7 and S18. Binds to IF-3.

Functionally, located on the platform of the 30S subunit, it bridges several disparate RNA helices of the 16S rRNA. Forms part of the Shine-Dalgarno cleft in the 70S ribosome. In Renibacterium salmoninarum (strain ATCC 33209 / DSM 20767 / JCM 11484 / NBRC 15589 / NCIMB 2235), this protein is Small ribosomal subunit protein uS11.